We begin with the raw amino-acid sequence, 139 residues long: Putative pre-16S rRNA nuclease (139 aa).

This sequence belongs to the YqgF nuclease family.

The protein localises to the cytoplasm. Functionally, could be a nuclease involved in processing of the 5'-end of pre-16S rRNA. The protein is Putative pre-16S rRNA nuclease of Thermoanaerobacter pseudethanolicus (strain ATCC 33223 / 39E) (Clostridium thermohydrosulfuricum).